The following is a 171-amino-acid chain: Crossover junction endodeoxyribonuclease RuvC (171 aa).

Residues Asp-7, Glu-67, and Asp-139 contribute to the active site. Residues Asp-7, Glu-67, and Asp-139 each coordinate Mg(2+).

Belongs to the RuvC family. Homodimer which binds Holliday junction (HJ) DNA. The HJ becomes 2-fold symmetrical on binding to RuvC with unstacked arms; it has a different conformation from HJ DNA in complex with RuvA. In the full resolvosome a probable DNA-RuvA(4)-RuvB(12)-RuvC(2) complex forms which resolves the HJ. Mg(2+) serves as cofactor.

It localises to the cytoplasm. It carries out the reaction Endonucleolytic cleavage at a junction such as a reciprocal single-stranded crossover between two homologous DNA duplexes (Holliday junction).. Its function is as follows. The RuvA-RuvB-RuvC complex processes Holliday junction (HJ) DNA during genetic recombination and DNA repair. Endonuclease that resolves HJ intermediates. Cleaves cruciform DNA by making single-stranded nicks across the HJ at symmetrical positions within the homologous arms, yielding a 5'-phosphate and a 3'-hydroxyl group; requires a central core of homology in the junction. The consensus cleavage sequence is 5'-(A/T)TT(C/G)-3'. Cleavage occurs on the 3'-side of the TT dinucleotide at the point of strand exchange. HJ branch migration catalyzed by RuvA-RuvB allows RuvC to scan DNA until it finds its consensus sequence, where it cleaves and resolves the cruciform DNA. This is Crossover junction endodeoxyribonuclease RuvC from Geotalea uraniireducens (strain Rf4) (Geobacter uraniireducens).